A 356-amino-acid chain; its full sequence is Acyl-coenzyme A diphosphatase NUDT19 (356 aa).

The region spanning 10–241 (AATVMLAAGW…IWLAPPQFYE (232 aa)) is the Nudix hydrolase domain. Residues 72-94 (PRFGLGPEPPRQPPFPGLSHGDA) are disordered. A compositionally biased stretch (pro residues) spans 78–87 (PEPPRQPPFP). Residues 97-118 (AALPDDVALRICAIRETFEEAG) carry the Nudix box motif. The Mg(2+) site is built by Glu112 and Glu116. Position 299 is an N6-succinyllysine (Lys299). The Microbody targeting signal motif lies at 354–356 (ARL).

The protein belongs to the Nudix hydrolase family. Monomer. Mg(2+) serves as cofactor. It depends on Mn(2+) as a cofactor.

The protein resides in the peroxisome. It catalyses the reaction an acyl-CoA + H2O = an acyl-4'-phosphopantetheine + adenosine 3',5'-bisphosphate + 2 H(+). It carries out the reaction CoA + H2O = (R)-4'-phosphopantetheine + adenosine 3',5'-bisphosphate + 2 H(+). The catalysed reaction is hexanoyl-CoA + H2O = hexanoyl-4'-phosphopantetheine + adenosine 3',5'-bisphosphate + 2 H(+). The enzyme catalyses octanoyl-CoA + H2O = S-octanoyl-4'-phosphopantetheine + adenosine 3',5'-bisphosphate + 2 H(+). It catalyses the reaction butanoyl-CoA + H2O = S-butanoyl-4'-phosphopantetheine + adenosine 3',5'-bisphosphate + 2 H(+). It carries out the reaction propanoyl-CoA + H2O = propanoyl-4'-phosphopantetheine + adenosine 3',5'-bisphosphate + 2 H(+). The catalysed reaction is malonyl-CoA + H2O = malonyl-4'-phosphopantetheine + adenosine 3',5'-bisphosphate + 2 H(+). The enzyme catalyses succinyl-CoA + H2O = succinyl-4'-phosphopantetheine + adenosine 3',5'-bisphosphate + 2 H(+). It catalyses the reaction choloyl-CoA + H2O = S-choloyl-4'-phosphopantetheine + adenosine 3',5'-bisphosphate + 2 H(+). It carries out the reaction 4,8-dimethylnonanoyl-CoA + H2O = S-(4,8-dimethylnonanoyl)-4'-phosphopantetheine + adenosine 3',5'-bisphosphate + 2 H(+). The catalysed reaction is (9Z,12Z,15Z)-octadecatrienoyl-CoA + H2O = S-(9Z,12Z,15Z-octadecatrienoyl)-4'-phosphopantetheine + adenosine 3',5'-bisphosphate + 2 H(+). The enzyme catalyses (9Z,12Z)-octadecadienoyl-CoA + H2O = S-(9Z,12Z-octadecadienoyl)-4'-phosphopantetheine + adenosine 3',5'-bisphosphate + 2 H(+). It catalyses the reaction (9Z)-hexadecenoyl-CoA + H2O = S-(9Z-hexadecenoyl)-4'-phosphopantetheine + adenosine 3',5'-bisphosphate + 2 H(+). It carries out the reaction (9Z)-tetradecenoyl-CoA + H2O = S-(9Z-tetradecenoyl)-4'-phosphopantetheine + adenosine 3',5'-bisphosphate + 2 H(+). The catalysed reaction is (6Z)-octenoyl-CoA + H2O = S-(6Z-octenoyl)-4'-phosphopantetheine + adenosine 3',5'-bisphosphate + 2 H(+). The enzyme catalyses hexadecanoyl-CoA + H2O = S-hexadecanoyl-4'-phosphopantetheine + adenosine 3',5'-bisphosphate + 2 H(+). It catalyses the reaction tetradecanoyl-CoA + H2O = tetradecanoyl-4'-phosphopantetheine + adenosine 3',5'-bisphosphate + 2 H(+). It carries out the reaction dodecanoyl-CoA + H2O = S-dodecanoyl-4'-phosphopantetheine + adenosine 3',5'-bisphosphate + 2 H(+). The catalysed reaction is a 5'-end CoA-ribonucleoside in mRNA + H2O = a 5'-end phospho-adenosine-phospho-ribonucleoside in mRNA + (R)-4'-phosphopantetheine + 2 H(+). Functionally, fatty acyl-coenzyme A (CoA) diphosphatase that hydrolyzes fatty acyl-CoA to yield acyl-4'-phosphopantetheine and adenosine 3',5'-bisphosphate. Mediates the hydrolysis of a wide range of CoA esters, including choloyl-CoA and branched-chain fatty-acyl-CoA esters and at low substrate concentrations medium and long-chain fatty-acyl-CoA esters are the primary substrates. Highest activity seen with medium-chain acyl-CoA esters and higher rates of activity seen with the unsaturated acyl-CoA esters compared with the saturated esters. Exhibits decapping activity towards dpCoA-capped RNAs in vitro. The chain is Acyl-coenzyme A diphosphatase NUDT19 (Nudt19) from Mus saxicola (Brown spiny mouse).